The following is a 287-amino-acid chain: MSLKERFTSYAYLIRLDKPIGTLLLLWPTLWALWLASSGTPSLQMLMIFIAGTFLMRSAGCAINDYADRDFDRHVQRTKHRPVTSGKISGKEAVVVAGVLALIAFLLIQPLNIFTKELSVLALLVAFIYPFTKRFLAIPQAVLGIAFGFGIPMAYAAVLDFIPLEAWVLFVGNIFWAIAYDTAYAMVDRDDDLRLGLRTSAITFGSYEVLAIAFSYGVLFVSQLWVAHLASLSNYFLIGWGAALGCAIYQLKLVSSRKREDCFLAFRHNNWLGGFLFLGIVLGLSIQ.

Helical transmembrane passes span 19 to 39, 43 to 63, 94 to 114, 118 to 138, 142 to 162, 167 to 187, 209 to 229, 235 to 255, and 263 to 283; these read PIGT…ASSG, LQML…GCAI, VVVA…LNIF, LSVL…FLAI, VLGI…LDFI, WVLF…YAMV, VLAI…VAHL, YFLI…KLVS, and FLAF…IVLG.

The protein belongs to the UbiA prenyltransferase family. Requires Mg(2+) as cofactor.

Its subcellular location is the cell inner membrane. It carries out the reaction all-trans-octaprenyl diphosphate + 4-hydroxybenzoate = 4-hydroxy-3-(all-trans-octaprenyl)benzoate + diphosphate. Its pathway is cofactor biosynthesis; ubiquinone biosynthesis. Catalyzes the prenylation of para-hydroxybenzoate (PHB) with an all-trans polyprenyl group. Mediates the second step in the final reaction sequence of ubiquinone-8 (UQ-8) biosynthesis, which is the condensation of the polyisoprenoid side chain with PHB, generating the first membrane-bound Q intermediate 3-octaprenyl-4-hydroxybenzoate. This chain is 4-hydroxybenzoate octaprenyltransferase, found in Polynucleobacter asymbioticus (strain DSM 18221 / CIP 109841 / QLW-P1DMWA-1) (Polynucleobacter necessarius subsp. asymbioticus).